The sequence spans 300 residues: Transcription initiation factor IIB 1 (300 aa).

The TFIIB-type zinc-finger motif lies at 3–34; the sequence is GKRVCPVCGSTEFIYDPSRGEIVCKVCGYVIE. The Zn(2+) site is built by Cys7, Cys10, Cys26, and Cys29. 2 repeat units span residues 114–197 and 210–291.

Belongs to the TFIIB family.

Its function is as follows. Stabilizes TBP binding to an archaeal box-A promoter. Also responsible for recruiting RNA polymerase II to the pre-initiation complex (DNA-TBP-TFIIB). In Thermococcus kodakarensis (strain ATCC BAA-918 / JCM 12380 / KOD1) (Pyrococcus kodakaraensis (strain KOD1)), this protein is Transcription initiation factor IIB 1.